Consider the following 1612-residue polypeptide: DNA (cytosine-5)-methyltransferase PliMCI (1612 aa).

In terms of domain architecture, DMAP1-binding spans 7-101; that stretch reads CDQVIPPNVR…NGDTKEEASS (95 aa). The disordered stretch occupies residues 87 to 338; that stretch reads TCSPVNGDTK…TAESKQPPLR (252 aa). Basic and acidic residues predominate over residues 94–110; the sequence is DTKEEASSNGKDDEKAE. Residues 115–131 show a composition bias toward low complexity; sequence NGTTSNGSTTNGSSGSS. Positions 132-142 are enriched in polar residues; the sequence is KANGHTNGGYV. Low complexity predominate over residues 143–154; the sequence is QSSSQEETGTSQ. Basic and acidic residues-rich tracts occupy residues 193–212, 222–232, and 260–289; these read VLGDDERDGVEKKEGEKKDV, EESATPDEKTL, and KKEEEKMEESSSMEVDKKEMENGDNGKKEE. Residues 626 to 672 form a CXXC-type zinc finger; that stretch reads ASERKKRCGVCEICQAPDCGKCTACKDMIKFGGSGKAKQACKDRRCP. Residues Cys-633, Cys-636, Cys-639, Cys-644, Cys-647, Cys-650, Cys-666, and Cys-671 each contribute to the Zn(2+) site. The interval 677 to 708 is disordered; sequence QEADENDIDEMDNSSNKENKDEKKAKKGRKLE. Over residues 678–688 the composition is skewed to acidic residues; that stretch reads EADENDIDEMD. The span at 691–708 shows a compositional bias: basic and acidic residues; sequence SNKENKDEKKAKKGRKLE. 2 BAH domains span residues 743 to 871 and 967 to 1089; these read EKIE…EDYE and NYRK…EDPP. The disordered stretch occupies residues 1084–1121; that stretch reads CFEDPPSKSRSTRMKGKGKGKGKGKAKGKIAVEKEEEK. Over residues 1093 to 1111 the composition is skewed to basic residues; sequence RSTRMKGKGKGKGKGKAKG. An SAM-dependent MTase C5-type domain is found at 1131 to 1590; the sequence is LKCLDVFAGC…MEIKVCLQTK (460 aa). Residues 1142–1143, 1160–1161, 1182–1183, and Cys-1183 contribute to the S-adenosyl-L-methionine site; these read GL, EK, and DC. Residue Cys-1218 is part of the active site. Residues Asn-1569 and Val-1571 each contribute to the S-adenosyl-L-methionine site.

The protein belongs to the class I-like SAM-binding methyltransferase superfamily. C5-methyltransferase family.

It is found in the nucleus. It catalyses the reaction a 2'-deoxycytidine in DNA + S-adenosyl-L-methionine = a 5-methyl-2'-deoxycytidine in DNA + S-adenosyl-L-homocysteine + H(+). Methylates CpG residues. The polypeptide is DNA (cytosine-5)-methyltransferase PliMCI (DNMT) (Paracentrotus lividus (Common sea urchin)).